Reading from the N-terminus, the 398-residue chain is MAKEKYDRSKPHVNIGTIGHVDHGKTTLTAAITTVLARRLPTSVNQPKDYASIDAAPEERERGITINTAHVEYETETRHYAHIDAPGHADYVKNMITGAAQMDGAILVVASTDGPMPQTREHILLSRQVGVKHLIVFMNKIDLVDDEELLELVEMEIRDLLSEYDFPGDDLPVIQGSALKALEGDSKYEDIIMELMKTADEYIPEPERDTDKPLLLPVEDVFSITGRGTVASGRIDRGTVRVNDEIEIVGIKEETKKAVVTGVEMFRKQLDEGLAGDNVGILLRGVQRDEIERGQVIAKPGSINPHTKFKGEVYILSKDEGGRHTPFFNNYRPQFYFRTTDVTGSIELPAGTEMVMPGDNVTISVELIHPIAVEQGTTFSIREGGRTVGSGIVSEIEA.

Positions 10-207 constitute a tr-type G domain; that stretch reads KPHVNIGTIG…TADEYIPEPE (198 aa). The tract at residues 19-26 is G1; it reads GHVDHGKT. 19 to 26 contacts GTP; the sequence is GHVDHGKT. T26 provides a ligand contact to Mg(2+). The G2 stretch occupies residues 63-67; that stretch reads GITIN. Positions 84–87 are G3; sequence DAPG. GTP is bound by residues 84-88 and 139-142; these read DAPGH and NKID. The interval 139–142 is G4; sequence NKID. The interval 177–179 is G5; sequence SAL.

The protein belongs to the TRAFAC class translation factor GTPase superfamily. Classic translation factor GTPase family. EF-Tu/EF-1A subfamily. Monomer.

The protein localises to the cytoplasm. It catalyses the reaction GTP + H2O = GDP + phosphate + H(+). GTP hydrolase that promotes the GTP-dependent binding of aminoacyl-tRNA to the A-site of ribosomes during protein biosynthesis. In Streptococcus uberis (strain ATCC BAA-854 / 0140J), this protein is Elongation factor Tu.